The sequence spans 350 residues: Phosphoribosylformylglycinamidine cyclo-ligase (350 aa).

Belongs to the AIR synthase family.

The protein localises to the cytoplasm. The catalysed reaction is 2-formamido-N(1)-(5-O-phospho-beta-D-ribosyl)acetamidine + ATP = 5-amino-1-(5-phospho-beta-D-ribosyl)imidazole + ADP + phosphate + H(+). Its pathway is purine metabolism; IMP biosynthesis via de novo pathway; 5-amino-1-(5-phospho-D-ribosyl)imidazole from N(2)-formyl-N(1)-(5-phospho-D-ribosyl)glycinamide: step 2/2. This Cupriavidus pinatubonensis (strain JMP 134 / LMG 1197) (Cupriavidus necator (strain JMP 134)) protein is Phosphoribosylformylglycinamidine cyclo-ligase.